The primary structure comprises 313 residues: Ubiquinone biosynthesis protein COQ4, mitochondrial (313 aa).

The Zn(2+) site is built by His197, Asp198, His201, and Glu213. The interval Gln290–Asn313 is disordered. The span at Lys303–Asn313 shows a compositional bias: basic and acidic residues.

Belongs to the COQ4 family. In terms of assembly, component of a multi-subunit COQ enzyme complex, composed of at least COQ3, COQ4, COQ5, COQ6, COQ7 and COQ9. Zn(2+) serves as cofactor.

It localises to the mitochondrion inner membrane. It catalyses the reaction a 4-hydroxy-3-methoxy-5-(all-trans-polyprenyl)benzoate + H(+) = a 2-methoxy-6-(all-trans-polyprenyl)phenol + CO2. It participates in cofactor biosynthesis; ubiquinone biosynthesis. Its function is as follows. Lyase that catalyzes the C1-decarboxylation of 4-hydroxy-3-methoxy-5-(all-trans-polyprenyl)benzoic acid into 2-methoxy-6-(all-trans-polyprenyl)phenol during ubiquinone biosynthesis. The sequence is that of Ubiquinone biosynthesis protein COQ4, mitochondrial from Meyerozyma guilliermondii (strain ATCC 6260 / CBS 566 / DSM 6381 / JCM 1539 / NBRC 10279 / NRRL Y-324) (Yeast).